Consider the following 591-residue polypeptide: Aspartate--tRNA ligase (591 aa).

Glutamate 175 contacts L-aspartate. The interval 199–202 (QLFK) is aspartate. Arginine 221 is a binding site for L-aspartate. ATP-binding positions include 221–223 (RDE) and glutamine 230. Histidine 449 contributes to the L-aspartate binding site. Glutamate 483 provides a ligand contact to ATP. Residue arginine 490 participates in L-aspartate binding. Residue 535–538 (GLDR) participates in ATP binding.

This sequence belongs to the class-II aminoacyl-tRNA synthetase family. Type 1 subfamily. In terms of assembly, homodimer.

It localises to the cytoplasm. It carries out the reaction tRNA(Asp) + L-aspartate + ATP = L-aspartyl-tRNA(Asp) + AMP + diphosphate. Catalyzes the attachment of L-aspartate to tRNA(Asp) in a two-step reaction: L-aspartate is first activated by ATP to form Asp-AMP and then transferred to the acceptor end of tRNA(Asp). The polypeptide is Aspartate--tRNA ligase (Oceanobacillus iheyensis (strain DSM 14371 / CIP 107618 / JCM 11309 / KCTC 3954 / HTE831)).